A 337-amino-acid polypeptide reads, in one-letter code: MQTLVNKIWYQGHPLQWLLLPLSFVFGFITFVRRGLFQLGLKAQTILPVPVIVVGNITVGGSGKTPMVIYLIELLRAHGFNPGVISRGYGANIDGVKQVAYNASATDVGDEPAMIVARSGVPMVVGSKRVEAANVLIAEHGVDVIICDDGLQHYALGRDIELVVIDGQRRLGNEYLLPAGPLREGPWRLKDVDFVVINGGNADVGQFEMQLAPTQVKAVDGNIITTDFDKSQPLVAMAGIGNPTRFFDSLQAQGYQVVLSHGFDDHQAYDKKQLCDLAKDLPLMMTEKDAVKCRDFAQENWWYLAVNAKLSPQFDEQLLSRLHEVVAAKQGNSHGIR.

58-65 (TVGGSGKT) is an ATP binding site.

The protein belongs to the LpxK family.

It catalyses the reaction a lipid A disaccharide + ATP = a lipid IVA + ADP + H(+). It functions in the pathway glycolipid biosynthesis; lipid IV(A) biosynthesis; lipid IV(A) from (3R)-3-hydroxytetradecanoyl-[acyl-carrier-protein] and UDP-N-acetyl-alpha-D-glucosamine: step 6/6. In terms of biological role, transfers the gamma-phosphate of ATP to the 4'-position of a tetraacyldisaccharide 1-phosphate intermediate (termed DS-1-P) to form tetraacyldisaccharide 1,4'-bis-phosphate (lipid IVA). This Shewanella putrefaciens (strain CN-32 / ATCC BAA-453) protein is Tetraacyldisaccharide 4'-kinase.